Reading from the N-terminus, the 42-residue chain is Photosystem II reaction center protein J (42 aa).

Residues 10–30 form a helical membrane-spanning segment; that stretch reads IPLWFIGVIAGIAALSIVGLF.

This sequence belongs to the PsbJ family. As to quaternary structure, PSII is composed of 1 copy each of membrane proteins PsbA, PsbB, PsbC, PsbD, PsbE, PsbF, PsbH, PsbI, PsbJ, PsbK, PsbL, PsbM, PsbT, PsbX, PsbY, PsbZ, Psb30/Ycf12, at least 3 peripheral proteins of the oxygen-evolving complex and a large number of cofactors. It forms dimeric complexes.

The protein localises to the plastid. Its subcellular location is the chloroplast thylakoid membrane. In terms of biological role, one of the components of the core complex of photosystem II (PSII). PSII is a light-driven water:plastoquinone oxidoreductase that uses light energy to abstract electrons from H(2)O, generating O(2) and a proton gradient subsequently used for ATP formation. It consists of a core antenna complex that captures photons, and an electron transfer chain that converts photonic excitation into a charge separation. The protein is Photosystem II reaction center protein J of Zygnema circumcarinatum (Green alga).